An 874-amino-acid polypeptide reads, in one-letter code: Alanine--tRNA ligase (874 aa).

4 residues coordinate Zn(2+): H562, H566, C665, and H669.

Belongs to the class-II aminoacyl-tRNA synthetase family. Zn(2+) serves as cofactor.

It localises to the cytoplasm. The enzyme catalyses tRNA(Ala) + L-alanine + ATP = L-alanyl-tRNA(Ala) + AMP + diphosphate. Its function is as follows. Catalyzes the attachment of alanine to tRNA(Ala) in a two-step reaction: alanine is first activated by ATP to form Ala-AMP and then transferred to the acceptor end of tRNA(Ala). Also edits incorrectly charged Ser-tRNA(Ala) and Gly-tRNA(Ala) via its editing domain. In Pseudomonas aeruginosa (strain ATCC 15692 / DSM 22644 / CIP 104116 / JCM 14847 / LMG 12228 / 1C / PRS 101 / PAO1), this protein is Alanine--tRNA ligase.